The following is a 389-amino-acid chain: MLLALAQWLQGDASFLRLFTYLTFRAVMATITALGIGLVCGPWVIRKLTQMKVGQAVRKDGPQSHLVKSGTPTMGGVLILIGIAVATLLWGDLTNRFIWIVMLVTFGFGVIGWVDDYRKVVHKDPRGMSSREKYFWQSVIGLFAAVYLAFSVSEANNVRVLDLFMAWVRSGLSMGLPARADLMLPFLKSISYPLGVWGFIVLTYFVIVGASNAVNLTDGLDGLVIMPVVLVGASLGVFAYVMGSSVYSKYLLFPHIPGAGELLIFCSAMGGAGLAFLWYNTHPAQVFMGDVGALALGGALGTVAVIVRQEIVLFIMGGIFVAETLSVMLQVSWFKYTKKRYGEGRRLLKMAPLHHHFELSGWKETQVVVRFWIITLMLCLFGLSTLKLR.

The next 10 helical transmembrane spans lie at 25-45, 73-93, 97-117, 135-155, 190-210, 222-242, 258-278, 286-306, 311-331, and 366-386; these read RAVMATITALGIGLVCGPWVI, TMGGVLILIGIAVATLLWGDL, FIWIVMLVTFGFGVIGWVDDY, FWQSVIGLFAAVYLAFSVSEA, ISYPLGVWGFIVLTYFVIVGA, GLVIMPVVLVGASLGVFAYVM, GAGELLIFCSAMGGAGLAFLW, VFMGDVGALALGGALGTVAVI, IVLFIMGGIFVAETLSVMLQV, and QVVVRFWIITLMLCLFGLSTL.

This sequence belongs to the glycosyltransferase 4 family. MraY subfamily. The cofactor is Mg(2+).

The protein resides in the cell inner membrane. It carries out the reaction UDP-N-acetyl-alpha-D-muramoyl-L-alanyl-gamma-D-glutamyl-meso-2,6-diaminopimeloyl-D-alanyl-D-alanine + di-trans,octa-cis-undecaprenyl phosphate = di-trans,octa-cis-undecaprenyl diphospho-N-acetyl-alpha-D-muramoyl-L-alanyl-D-glutamyl-meso-2,6-diaminopimeloyl-D-alanyl-D-alanine + UMP. It functions in the pathway cell wall biogenesis; peptidoglycan biosynthesis. Functionally, catalyzes the initial step of the lipid cycle reactions in the biosynthesis of the cell wall peptidoglycan: transfers peptidoglycan precursor phospho-MurNAc-pentapeptide from UDP-MurNAc-pentapeptide onto the lipid carrier undecaprenyl phosphate, yielding undecaprenyl-pyrophosphoryl-MurNAc-pentapeptide, known as lipid I. This chain is Phospho-N-acetylmuramoyl-pentapeptide-transferase, found in Burkholderia vietnamiensis (strain G4 / LMG 22486) (Burkholderia cepacia (strain R1808)).